The chain runs to 240 residues: Dihydromonapterin reductase (240 aa).

Tyr-152 acts as the Proton acceptor in catalysis.

It belongs to the short-chain dehydrogenases/reductases (SDR) family. FolM subfamily.

It catalyses the reaction (6S)-5,6,7,8-tetrahydrofolate + NADP(+) = 7,8-dihydrofolate + NADPH + H(+). The catalysed reaction is 7,8-dihydromonapterin + NADPH + H(+) = 5,6,7,8-tetrahydromonapterin + NADP(+). Functionally, catalyzes the reduction of dihydromonapterin to tetrahydromonapterin. Also has lower activity with dihydrofolate. The chain is Dihydromonapterin reductase (folM) from Escherichia coli O1:K1 / APEC.